The following is a 114-amino-acid chain: Flagellar hook-basal body complex protein FliE (114 aa).

Belongs to the FliE family.

It is found in the bacterial flagellum basal body. This Burkholderia multivorans (strain ATCC 17616 / 249) protein is Flagellar hook-basal body complex protein FliE.